Here is a 247-residue protein sequence, read N- to C-terminus: Carboxy-S-adenosyl-L-methionine synthase (247 aa).

S-adenosyl-L-methionine-binding positions include Tyr39, 64–66, 89–90, 117–118, Asn132, and Arg199; these read GCS, DN, and DI.

This sequence belongs to the class I-like SAM-binding methyltransferase superfamily. Cx-SAM synthase family. Homodimer.

It carries out the reaction prephenate + S-adenosyl-L-methionine = carboxy-S-adenosyl-L-methionine + 3-phenylpyruvate + H2O. In terms of biological role, catalyzes the conversion of S-adenosyl-L-methionine (SAM) to carboxy-S-adenosyl-L-methionine (Cx-SAM). The sequence is that of Carboxy-S-adenosyl-L-methionine synthase from Escherichia coli O7:K1 (strain IAI39 / ExPEC).